Reading from the N-terminus, the 553-residue chain is Membrane protein insertase YidC (553 aa).

The next 5 helical transmembrane spans lie at 7 to 24 (VLWVIFFMSAVMLYDNWQ), 365 to 385 (WGWAIVLLTVLIKAVFFPLSA), 435 to 455 (LPVVIQIPVFISLYWVLLASV), 474 to 494 (PFFILPVLMAVSMFVQTSLNP), and 509 to 529 (PIAFSVMFFFFPAGLVLYYVV).

It belongs to the OXA1/ALB3/YidC family. Type 1 subfamily. Interacts with the Sec translocase complex via SecD. Specifically interacts with transmembrane segments of nascent integral membrane proteins during membrane integration.

The protein localises to the cell inner membrane. Its function is as follows. Required for the insertion and/or proper folding and/or complex formation of integral membrane proteins into the membrane. Involved in integration of membrane proteins that insert both dependently and independently of the Sec translocase complex, as well as at least some lipoproteins. Aids folding of multispanning membrane proteins. In Burkholderia orbicola (strain MC0-3), this protein is Membrane protein insertase YidC.